Here is a 501-residue protein sequence, read N- to C-terminus: Glycerol kinase (501 aa).

Thr17 is a binding site for ADP. Residues Thr17, Thr18, and Ser19 each contribute to the ATP site. Sn-glycerol 3-phosphate is bound at residue Thr17. Arg21 provides a ligand contact to ADP. Sn-glycerol 3-phosphate contacts are provided by Arg87, Glu88, Tyr139, and Asp243. The glycerol site is built by Arg87, Glu88, Tyr139, Asp243, and Gln244. The ADP site is built by Thr265 and Gly308. Thr265, Gly308, Gln312, and Gly409 together coordinate ATP. 2 residues coordinate ADP: Gly409 and Asn413.

Belongs to the FGGY kinase family.

The catalysed reaction is glycerol + ATP = sn-glycerol 3-phosphate + ADP + H(+). The protein operates within polyol metabolism; glycerol degradation via glycerol kinase pathway; sn-glycerol 3-phosphate from glycerol: step 1/1. With respect to regulation, inhibited by fructose 1,6-bisphosphate (FBP). Its function is as follows. Key enzyme in the regulation of glycerol uptake and metabolism. Catalyzes the phosphorylation of glycerol to yield sn-glycerol 3-phosphate. This Pseudomonas syringae pv. syringae (strain B728a) protein is Glycerol kinase.